Consider the following 724-residue polypeptide: Solute carrier organic anion transporter family member 4C1 (724 aa).

The Cytoplasmic portion of the chain corresponds to 1–105; that stretch reads MKSAKGIENL…QCLQRCNTPG (105 aa). 5 positions are modified to phosphoserine: S15, S16, S24, S26, and S28. The disordered stretch occupies residues 24 to 71; the sequence is SASPSQVEVSALSSDPQRENSQPQELQKPQEPQKSPEPSLPSAPPNVS. Positions 25-38 are enriched in polar residues; sequence ASPSQVEVSALSSD. Positions 44 to 60 are enriched in low complexity; the sequence is SQPQELQKPQEPQKSPE. The chain crosses the membrane as a helical span at residues 106 to 126; that stretch reads GFLLHYCLLAVTQGIVVNGLV. At 127-145 the chain is on the extracellular side; that stretch reads NISISTIEKRYEMKSSLTG. Residues 146-166 form a helical membrane-spanning segment; it reads LISSSYDISFCLLSLFVSFFG. At 167–172 the chain is on the cytoplasmic side; the sequence is ERGHKP. A helical transmembrane segment spans residues 173–197; it reads RWLAFAAFMIGLGALVFSLPQFFSG. Residues 198-224 lie on the Extracellular side of the membrane; the sequence is EYKLGSLFEDTCVTTRNSTSCTSSTSS. The helical transmembrane segment at 225–254 threads the bilayer; it reads LSNYLYVFILGQLLLGAGGTPLYTLGTAFL. Residues 255 to 274 lie on the Cytoplasmic side of the membrane; sequence DDSVPTHKSSLYIGTGYAMS. The chain crosses the membrane as a helical span at residues 275-295; sequence ILGPAIGYVLGGQLLTIYVDV. The Extracellular portion of the chain corresponds to 296-311; it reads AMGESTDITEDDPRWL. A helical membrane pass occupies residues 312-336; the sequence is GAWWIGFLLSWIFAWSLIIPFSCFP. The Cytoplasmic segment spans residues 337–377; sequence KHLPGTAEIQAGKTSQAHQSNSNADAKFGKSIKDFPAALKN. A helical transmembrane segment spans residues 378–399; that stretch reads LMKNAVFMCLVLSTSSEALITT. Residues 400–419 lie on the Extracellular side of the membrane; that stretch reads GFATFLPKFIENQFGLTSSF. The chain crosses the membrane as a helical span at residues 420–443; sequence AATLGGAVLIPGAALGQILGGFLV. Residues 444–447 are Cytoplasmic-facing; the sequence is SKFK. A helical transmembrane segment spans residues 448 to 471; it reads MTCKNTMKFALFTSGVALTLSFVF. Residues 472–580 are Extracellular-facing; that stretch reads IYAKCGNEPF…ETHCAKLPIF (109 aa). In terms of domain architecture, Kazal-like spans 495–549; the sequence is GNLIAPCNANCNCLRSYYYPVCGDGVQYFSPCFAGCSNSVAHRKPKVYYNCSCIE. 3 disulfides stabilise this stretch: C501–C530, C507–C526, and C516–C547. The chain crosses the membrane as a helical span at residues 581-603; sequence LCIFFIVIIFTFMAGTPITVSIL. The Cytoplasmic portion of the chain corresponds to 604-612; that stretch reads RCVNHRQRS. A helical membrane pass occupies residues 613–638; sequence LALGIQFMVLRLLGTIPGPIIFGFTI. At 639-672 the chain is on the extracellular side; sequence DSTCILWDINDCGIKGACRIYDNIKMAHMLVAIS. The helical transmembrane segment at 673–690 threads the bilayer; the sequence is VTCKVITMFFNGFAIFLY. At 691-724 the chain is on the cytoplasmic side; it reads KPPPSATDLSFHKENAVVTNVLAEQDLNKIVKEG.

The protein belongs to the organo anion transporter (TC 2.A.60) family.

The protein resides in the basolateral cell membrane. It carries out the reaction estrone 3-sulfate(out) = estrone 3-sulfate(in). The catalysed reaction is L-thyroxine(out) = L-thyroxine(in). The enzyme catalyses 3,3',5-triiodo-L-thyronine(out) = 3,3',5-triiodo-L-thyronine(in). It catalyses the reaction chenodeoxycholate(out) = chenodeoxycholate(in). It carries out the reaction glycocholate(out) = glycocholate(in). The catalysed reaction is L-homoarginine(in) = L-homoarginine(out). The enzyme catalyses L-arginine(in) = L-arginine(out). It catalyses the reaction N(omega),N(omega)-dimethyl-L-arginine(out) = N(omega),N(omega)-dimethyl-L-arginine(in). Functionally, mediates the transport of organic anions such as steroids (estrone 3-sulfate, chenodeoxycholate, glycocholate) and thyroid hormones (3,3',5-triiodo-L-thyronine (T3), L-thyroxine (T4)), in the kidney. Capable of transporting cAMP and pharmacological substances such as digoxin, ouabain and methotrexate. Transport is independent of sodium, chloride ion, and ATP. Transport activity is stimulated by an acidic extracellular environment due to increased substrate affinity to the transporter. The driving force for this transport activity is currently not known. The role of hydrogencarbonate (HCO3(-), bicarbonate) as the probable counteranion that exchanges for organic anions is still not well defined. Functions as an uptake transporter at the apical membrane, suggesting a role in renal reabsorption. Involved in the renal secretion of the uremic toxin ADMA (N(omega),N(omega)-dimethyl-L-arginine or asymmetrical dimethylarginine), which is associated to cardiovascular events and mortality, and the structurally related amino acids L-arginine and L-homoarginine (a cardioprotective biomarker). Can act bidirectionally, suggesting a dual protective role of this transport protein; exporting L-homoarginine after being synthesized in proximal tubule cells, and mediating uptake of ADMA from the blood into proximal tubule cells where it is degraded by the enzyme dimethylarginine dimethylaminohydrolase 1 (DDAH1). May be involved in sperm maturation by enabling directed movement of organic anions and compounds within or between cells. This ion-transporting process is important to maintain the strict epididymal homeostasis necessary for sperm maturation. May have a role in secretory functions since seminal vesicle epithelial cells are assumed to secrete proteins involved in decapacitation by modifying surface proteins to facilitate the acquisition of the ability to fertilize the egg. The polypeptide is Solute carrier organic anion transporter family member 4C1 (Pongo abelii (Sumatran orangutan)).